Reading from the N-terminus, the 273-residue chain is Large ribosomal subunit protein uL2 (273 aa).

The disordered stretch occupies residues 224 to 263; sequence AMNPVDHPHGGGEGRNFGKHPVTPWGLQTKGKKTRKNKRT. Over residues 253 to 263 the composition is skewed to basic residues; that stretch reads KGKKTRKNKRT.

The protein belongs to the universal ribosomal protein uL2 family. As to quaternary structure, part of the 50S ribosomal subunit. Forms a bridge to the 30S subunit in the 70S ribosome.

In terms of biological role, one of the primary rRNA binding proteins. Required for association of the 30S and 50S subunits to form the 70S ribosome, for tRNA binding and peptide bond formation. It has been suggested to have peptidyltransferase activity; this is somewhat controversial. Makes several contacts with the 16S rRNA in the 70S ribosome. The sequence is that of Large ribosomal subunit protein uL2 from Buchnera aphidicola subsp. Schizaphis graminum (strain Sg).